Here is an 859-residue protein sequence, read N- to C-terminus: Leucine--tRNA ligase (859 aa).

The 'HIGH' region motif lies at 42–52; that stretch reads PYPSGKLHVGH. The short motif at 611–615 is the 'KMSKS' region element; sequence KMSKS. Lys-614 provides a ligand contact to ATP.

The protein belongs to the class-I aminoacyl-tRNA synthetase family.

It is found in the cytoplasm. The enzyme catalyses tRNA(Leu) + L-leucine + ATP = L-leucyl-tRNA(Leu) + AMP + diphosphate. The chain is Leucine--tRNA ligase from Fusobacterium nucleatum subsp. nucleatum (strain ATCC 25586 / DSM 15643 / BCRC 10681 / CIP 101130 / JCM 8532 / KCTC 2640 / LMG 13131 / VPI 4355).